We begin with the raw amino-acid sequence, 794 residues long: Phenylalanine--tRNA ligase beta subunit (794 aa).

The tRNA-binding domain maps to 40-158 (NSLNSELILG…LKKYIGSDVK (119 aa)). The B5 domain maps to 402–477 (KNKQSLEIKL…RLYSYDKIDE (76 aa)). Positions 455, 461, 464, and 465 each coordinate Mg(2+). The region spanning 702–794 (SKFQSSSRDL…NIKQMKVVIR (93 aa)) is the FDX-ACB domain.

The protein belongs to the phenylalanyl-tRNA synthetase beta subunit family. Type 1 subfamily. In terms of assembly, tetramer of two alpha and two beta subunits. Requires Mg(2+) as cofactor.

The protein resides in the cytoplasm. It carries out the reaction tRNA(Phe) + L-phenylalanine + ATP = L-phenylalanyl-tRNA(Phe) + AMP + diphosphate + H(+). The protein is Phenylalanine--tRNA ligase beta subunit of Mycoplasma mycoides subsp. mycoides SC (strain CCUG 32753 / NCTC 10114 / PG1).